We begin with the raw amino-acid sequence, 715 residues long: Inducible lysine decarboxylase (715 aa).

K367 carries the N6-(pyridoxal phosphate)lysine modification.

Belongs to the Orn/Lys/Arg decarboxylase class-I family. Homodecamer. Interacts with RavA. Pyridoxal 5'-phosphate is required as a cofactor.

The protein resides in the cytoplasm. It catalyses the reaction L-lysine + H(+) = cadaverine + CO2. The chain is Inducible lysine decarboxylase (cadA) from Escherichia coli O157:H7.